We begin with the raw amino-acid sequence, 1174 residues long: Male determiner protein Mdmd(Y) (1174 aa).

A compositionally biased stretch (basic and acidic residues) spans 1-15 (MNATDAESRKPENKP). 3 disordered regions span residues 1–51 (MNAT…SGQR), 79–109 (RKDGSNEMLPKEDSINTNHNYTTDSDEHPVE), and 136–259 (KQLS…LRRS). A compositionally biased stretch (low complexity) spans 16-35 (SSESSSSGSTSGSSDGEVSS). Polar residues predominate over residues 36–47 (KTYFKNNKSKVL). The span at 79 to 92 (RKDGSNEMLPKEDS) shows a compositional bias: basic and acidic residues. The segment covering 138–153 (LSAYRSRSRSTRLSYS) has biased composition (low complexity). Positions 167–180 (SRYKKSVLRNRRTS) are enriched in basic residues. Basic and acidic residues predominate over residues 183 to 200 (HGRDSSTTKRSVSRDKDN). Positions 201–223 (RLRRRIGSSRSHTRSHSRFRRSE) are enriched in basic residues. The span at 235 to 259 (RSQERRHERRRSMSSDYERIALRRS) shows a compositional bias: basic and acidic residues. The MIF4G domain occupies 348–531 (KKYIHGYINK…KVLFQVRRDG (184 aa)). Residues 597-608 (DSDGSFGSGSNS) are compositionally biased toward low complexity. The segment at 597–616 (DSDGSFGSGSNSETALSDCD) is disordered. The 117-residue stretch at 641 to 757 (ALRRTIYLTL…SWDVLDCIKL (117 aa)) folds into the MI domain. Positions 840-857 (SAPSSSSSSSLSSELSAP) are enriched in low complexity. 2 disordered regions span residues 840-1045 (SAPS…SRTK) and 1089-1135 (KGGP…SREY). 2 stretches are compositionally biased toward basic residues: residues 869–886 (KKKHKGKNKKMTKKKNPS) and 895–909 (IVGKNKIAAKNKTIK). Residues 910 to 924 (RRTDKDNSSSKDNFL) show a composition bias toward basic and acidic residues. The segment covering 926–957 (SESSSNESISLDSLSSELFAPSSYSSSESSND) has biased composition (low complexity). A compositionally biased stretch (basic residues) spans 963–1001 (KHKGKNKKMTKKKNPSNKREKTKKKLSKNKKAPNKNTKK). A compositionally biased stretch (low complexity) spans 1010–1020 (SSESSISESKS). Over residues 1034-1045 (RKKRVTSKSRTK) the composition is skewed to basic residues. Residues 1089 to 1118 (KGGPNCRKDNYGNRQNHEISQRHDSEIKRR) show a composition bias toward basic and acidic residues. Residues 1119-1130 (REERKKRHHEKN) are compositionally biased toward basic residues.

Belongs to the CWC22 family. Component of the spliceosome C complex.

Its subcellular location is the nucleus speckle. Its function is as follows. Male determiner protein (M-factor) that controls male somatic sexual differentiation. Acts as a dominant factor that regulates the mRNA splicing of transformer (tra) and doublesex (dsx) transcripts and promotes expression of male splice forms of tra and dsx. Probably acts as a component of the spliceosome C complex required for mRNA splicing factor and exon-junction complex (EJC) assembly. Hinders eIF4AIII from non-specifically binding RNA and escorts it to the splicing machinery to promote EJC assembly on mature mRNAs. This chain is Male determiner protein Mdmd(Y), found in Musca domestica (House fly).